A 496-amino-acid chain; its full sequence is ATP-dependent protease ATPase subunit HslU2 (496 aa).

The transit peptide at Met1–Cys10 directs the protein to the mitochondrion. Residues Val51 and Gly94–Glu99 contribute to the ATP site. Over residues Gly177 to Ser191 the composition is skewed to low complexity. Residues Gly177–Asn204 are disordered. The ATP site is built by Asp308, Glu374, and Arg446.

The protein belongs to the ClpX chaperone family. HslU subfamily. As to quaternary structure, a double ring-shaped homohexamer of HslV is capped on each side by a ring-shaped HslU homohexamer. The assembly of the HslU/HslV complex (HslVU) is dependent on binding of ATP.

It localises to the mitochondrion matrix. The protein localises to the kinetoplast. In terms of biological role, ATPase subunit of a proteasome-like degradation complex; this subunit has chaperone activity. The binding of ATP and its subsequent hydrolysis by HslU are essential for unfolding of protein substrates subsequently hydrolyzed by HslV. HslU recognizes the N-terminal part of its protein substrates and unfolds these before they are guided to HslV for hydrolysis. The HslVU protease complex functions in mitochondrial DNA replication by regulating DNA helicase PIF2 protein levels. The polypeptide is ATP-dependent protease ATPase subunit HslU2 (HslU2) (Trypanosoma brucei brucei (strain 927/4 GUTat10.1)).